The chain runs to 351 residues: Histidine protein kinase SaeS (351 aa).

2 consecutive transmembrane segments (helical) span residues 9–29 and 40–60; these read IIIG…IAYI and TLTL…SIFI. One can recognise an HAMP domain in the interval 61-114; it reads NPLIQKIKQFNIKTKQFANGNYASNDKTFNSPKEIYELNQSFNKMASEITQQMN. The 220-residue stretch at 129–348 folds into the Histidine kinase domain; it reads NLAHDLKTPL…TMTVTLHKLD (220 aa). H132 is subject to Phosphohistidine; by autocatalysis.

In terms of processing, autophosphorylated.

The protein localises to the cell membrane. The catalysed reaction is ATP + protein L-histidine = ADP + protein N-phospho-L-histidine.. Functionally, member of the two-component regulatory system SaeR/SaeS involved in the regulation of staphylococcal virulence factors in a strain-dependent fashion. Probably functions as a membrane-associated protein kinase that upon sensing the appropriate signal, autophosphorylates and in turn activates the cytosolic response regulator SaeR. This chain is Histidine protein kinase SaeS (saeS), found in Staphylococcus aureus (strain USA300).